Consider the following 187-residue polypeptide: UPF0301 protein SO_3346 (187 aa).

Belongs to the UPF0301 (AlgH) family.

The polypeptide is UPF0301 protein SO_3346 (Shewanella oneidensis (strain ATCC 700550 / JCM 31522 / CIP 106686 / LMG 19005 / NCIMB 14063 / MR-1)).